The primary structure comprises 282 residues: sn-glycerol-3-phosphate transport system permease protein UgpE (282 aa).

Helical transmembrane passes span 14-34 (LILILGIIIVAFPIYYTFVAS), 86-106 (MAIAVGKIIISFMSAFAIVFF), 112-132 (MFFFWMIFITLMLPVEVRILP), 146-168 (YAGLTLPLMASATATFLFRQFFL), 201-221 (IAALFVILFIYGWTQYLWPLL), and 248-268 (WNYVMVTAILAIIPLILVVVL). Residues 78-269 (LWNSFVVAMA…IPLILVVVLM (192 aa)) enclose the ABC transmembrane type-1 domain.

Belongs to the binding-protein-dependent transport system permease family. In terms of assembly, the complex is composed of two ATP-binding proteins (UgpC), two transmembrane proteins (UgpA and UgpE) and a solute-binding protein (UgpB).

The protein resides in the cell inner membrane. In terms of biological role, part of the ABC transporter complex UgpBAEC involved in sn-glycerol-3-phosphate (G3P) import. Probably responsible for the translocation of the substrate across the membrane. The protein is sn-glycerol-3-phosphate transport system permease protein UgpE (ugpE) of Brucella abortus (strain 2308).